Consider the following 367-residue polypeptide: MGWGQVDTVVGETRANVIPLHIKRGRVASRRRAGYRVDGSRQHPSLLSDLRGRASAEQIAAVVREIDEHRRSTGATNLWEVTTEAPLSELAQHVAAVAGFLRQRLTGDYTVDEFGFDPHFNNAIIRPFLRFFFKSWFRVEVSGIENLPSTGGALVVANHAGVLPFDGLMLSLAVHDEHPAQRDLRLLVADMVFDLPVVGEAVRKAGHTVACTSDAHRLLAAGELTAVFPEGYKGLGKRFQDRYRLQRFGRGGFVKAALSTKATIVPCSIVGSEEIYPMLTDVKLLARLFGVPYFPVTPLFPLAGPAGLVPLPSKWRIAFGEPIYTTDYAATDADDPMVTFELTDQVRETIQQTLYRLLAGRRNIFFG.

This sequence to M.tuberculosis Rv0502.

This is an uncharacterized protein from Mycobacterium leprae (strain TN).